The chain runs to 140 residues: Active regulator of SIRT1 (140 aa).

Disordered stretches follow at residues 1 to 52 (MSAS…KNKA) and 95 to 123 (QQVL…EGTV). Positions 108–120 (DRPAEKKEKKKPE) are enriched in basic and acidic residues.

The protein belongs to the AROS family. Part of the small subunit (SSU) processome, composed of more than 70 proteins and the RNA chaperone small nucleolar RNA (snoRNA) U3.

It is found in the nucleus. The protein localises to the nucleolus. In terms of biological role, part of the small subunit (SSU) processome, first precursor of the small eukaryotic ribosomal subunit. During the assembly of the SSU processome in the nucleolus, many ribosome biogenesis factors, an RNA chaperone and ribosomal proteins associate with the nascent pre-rRNA and work in concert to generate RNA folding, modifications, rearrangements and cleavage as well as targeted degradation of pre-ribosomal RNA by the RNA exosome. Acts as a chaperone that specifically mediates the integration of RPS19 in state post-A1. Direct regulator of SIRT1. This Gallus gallus (Chicken) protein is Active regulator of SIRT1 (RPS19BP1).